The sequence spans 258 residues: UPF0246 protein YaaA (258 aa).

This sequence belongs to the UPF0246 family.

This chain is UPF0246 protein YaaA, found in Escherichia coli O157:H7.